The following is a 281-amino-acid chain: L-ornithine N(alpha)-acyltransferase (281 aa).

It belongs to the acetyltransferase family. OlsB subfamily.

It catalyses the reaction a (3R)-hydroxyacyl-[ACP] + L-ornithine = a lyso-ornithine lipid + holo-[ACP] + H(+). It functions in the pathway lipid metabolism. Catalyzes the first step in the biosynthesis of ornithine lipids, which are phosphorus-free membrane lipids. Catalyzes the 3-hydroxyacyl-acyl carrier protein-dependent acylation of ornithine to form lyso-ornithine lipid (LOL). In Brucella abortus (strain 2308), this protein is L-ornithine N(alpha)-acyltransferase.